The following is a 296-amino-acid chain: Aspartate and glycine-rich protein (296 aa).

Over residues 1 to 77 the composition is skewed to gly residues; that stretch reads GDGENGNGNG…GNGNGNGNGN (77 aa). Disordered stretches follow at residues 1–219 and 233–296; these read GDGE…DNGG and RARA…YTSY. 2 stretches are compositionally biased toward acidic residues: residues 80–96 and 103–194; these read FDDD…DDWN and NGDD…DDRW. Residues 198-210 show a composition bias toward gly residues; that stretch reads NGNGNGNGNGNGN. The segment covering 233 to 243 has biased composition (low complexity); that stretch reads RARAAASAAGR. Gly residues predominate over residues 244 to 259; it reads SRGGSGGSGGSGGSGG. A compositionally biased stretch (low complexity) spans 270-281; the sequence is RAFASARASSGN.

In terms of tissue distribution, component of the acid-soluble and acid-insoluble organic matrix of calcified shell layers (at protein level).

The protein resides in the secreted. In Haliotis asinina (Donkey's ear abalone), this protein is Aspartate and glycine-rich protein.